Consider the following 317-residue polypeptide: UV DNA damage endonuclease (317 aa).

This sequence belongs to the uve1/UvsE family.

Functionally, component in a DNA repair pathway. Removal of UV LIGHT damaged nucleotides. Recognizes pyrimidine dimers and cleave a phosphodiester bond immediately 5' to the lesion. This Bacillus mycoides (strain KBAB4) (Bacillus weihenstephanensis) protein is UV DNA damage endonuclease.